Reading from the N-terminus, the 163-residue chain is ATP synthase subunit b 1 (163 aa).

A helical transmembrane segment spans residues 7–27 (AETWVAVAFVILMALFAYLGV).

Belongs to the ATPase B chain family. As to quaternary structure, F-type ATPases have 2 components, F(1) - the catalytic core - and F(0) - the membrane proton channel. F(1) has five subunits: alpha(3), beta(3), gamma(1), delta(1), epsilon(1). F(0) has three main subunits: a(1), b(2) and c(10-14). The alpha and beta chains form an alternating ring which encloses part of the gamma chain. F(1) is attached to F(0) by a central stalk formed by the gamma and epsilon chains, while a peripheral stalk is formed by the delta and b chains.

The protein localises to the cell inner membrane. F(1)F(0) ATP synthase produces ATP from ADP in the presence of a proton or sodium gradient. F-type ATPases consist of two structural domains, F(1) containing the extramembraneous catalytic core and F(0) containing the membrane proton channel, linked together by a central stalk and a peripheral stalk. During catalysis, ATP synthesis in the catalytic domain of F(1) is coupled via a rotary mechanism of the central stalk subunits to proton translocation. Functionally, component of the F(0) channel, it forms part of the peripheral stalk, linking F(1) to F(0). This chain is ATP synthase subunit b 1, found in Rhodopseudomonas palustris (strain BisB5).